We begin with the raw amino-acid sequence, 431 residues long: Lipoyl synthase 2, mitochondrial (431 aa).

Positions 21–43 (SPLGKLQEERGEGVAKDPKKDKQ) are disordered. Basic and acidic residues predominate over residues 26–40 (LQEERGEGVAKDPKK). [4Fe-4S] cluster-binding residues include Cys127, Cys132, Cys138, Cys159, Cys163, Cys166, and Ser375. One can recognise a Radical SAM core domain in the interval 142-364 (DEEEGTATAT…EEEAMAMGFL (223 aa)).

The protein belongs to the radical SAM superfamily. Lipoyl synthase family. [4Fe-4S] cluster is required as a cofactor.

It localises to the mitochondrion. The enzyme catalyses [[Fe-S] cluster scaffold protein carrying a second [4Fe-4S](2+) cluster] + N(6)-octanoyl-L-lysyl-[protein] + 2 oxidized [2Fe-2S]-[ferredoxin] + 2 S-adenosyl-L-methionine + 4 H(+) = [[Fe-S] cluster scaffold protein] + N(6)-[(R)-dihydrolipoyl]-L-lysyl-[protein] + 4 Fe(3+) + 2 hydrogen sulfide + 2 5'-deoxyadenosine + 2 L-methionine + 2 reduced [2Fe-2S]-[ferredoxin]. It participates in protein modification; protein lipoylation via endogenous pathway; protein N(6)-(lipoyl)lysine from octanoyl-[acyl-carrier-protein]: step 2/2. Its function is as follows. Catalyzes the radical-mediated insertion of two sulfur atoms into the C-6 and C-8 positions of the octanoyl moiety bound to the lipoyl domains of lipoate-dependent enzymes, thereby converting the octanoylated domains into lipoylated derivatives. This Trypanosoma cruzi (strain CL Brener) protein is Lipoyl synthase 2, mitochondrial.